The sequence spans 238 residues: Alpha-tubulin N-acetyltransferase (238 aa).

Positions Met-1–Phe-196 constitute an N-acetyltransferase domain. Acetyl-CoA is bound by residues Phe-129–Lys-142 and Ser-165–Lys-174.

It belongs to the acetyltransferase ATAT1 family.

The enzyme catalyses L-lysyl-[alpha-tubulin] + acetyl-CoA = N(6)-acetyl-L-lysyl-[alpha-tubulin] + CoA + H(+). Specifically acetylates 'Lys-40' in alpha-tubulin on the lumenal side of microtubules. Promotes microtubule destabilization and accelerates microtubule dynamics; this activity may be independent of acetylation activity. Acetylates alpha-tubulin with a slow enzymatic rate, due to a catalytic site that is not optimized for acetyl transfer. Enters the microtubule through each end and diffuses quickly throughout the lumen of microtubules. Acetylates only long/old microtubules because of its slow acetylation rate since it does not have time to act on dynamically unstable microtubules before the enzyme is released. The protein is Alpha-tubulin N-acetyltransferase of Trichoplax adhaerens (Trichoplax reptans).